A 209-amino-acid chain; its full sequence is MGQKVHPRGFRLGITTDWQAKWFNEKNYKEYLLEDEEIRKVIKSKYAQAGISEIVIERPDSERVVAIVKTARPGIIIGKKGAEITALRKDLEEKFNRRFIVNVEEIKTPEVDAQLIAENVANRIEKRASYKVVMKRAIFNAMKKGAKGIKIMVSGRLAGAEIARTEWYLKGRLPLQTIRSIIDYGTARAETKYGTIGIKVWVYKGDADI.

One can recognise a KH type-2 domain in the interval 38–107 (IRKVIKSKYA…RFIVNVEEIK (70 aa)).

It belongs to the universal ribosomal protein uS3 family. Part of the 30S ribosomal subunit. Forms a tight complex with proteins S10 and S14.

Its function is as follows. Binds the lower part of the 30S subunit head. Binds mRNA in the 70S ribosome, positioning it for translation. The protein is Small ribosomal subunit protein uS3 of Thermosipho melanesiensis (strain DSM 12029 / CIP 104789 / BI429).